Here is a 368-residue protein sequence, read N- to C-terminus: 3-dehydroquinate synthase (368 aa).

Residues 76–81, 110–114, 134–135, Lys147, Lys156, and 174–177 each bind NAD(+); these read DGEQYK, GVIGD, TT, and CLKT. Zn(2+) is bound by residues Glu189, His252, and His269.

This sequence belongs to the sugar phosphate cyclases superfamily. Dehydroquinate synthase family. The cofactor is NAD(+). It depends on Co(2+) as a cofactor. Zn(2+) serves as cofactor.

Its subcellular location is the cytoplasm. The enzyme catalyses 7-phospho-2-dehydro-3-deoxy-D-arabino-heptonate = 3-dehydroquinate + phosphate. It functions in the pathway metabolic intermediate biosynthesis; chorismate biosynthesis; chorismate from D-erythrose 4-phosphate and phosphoenolpyruvate: step 2/7. Catalyzes the conversion of 3-deoxy-D-arabino-heptulosonate 7-phosphate (DAHP) to dehydroquinate (DHQ). The chain is 3-dehydroquinate synthase from Vibrio vulnificus (strain YJ016).